A 383-amino-acid polypeptide reads, in one-letter code: tRNA (guanine(26)-N(2))-dimethyltransferase (383 aa).

One can recognise a Trm1 methyltransferase domain in the interval 4–371 (EIITEGRTPL…ASPEEFEAVL (368 aa)). 5 residues coordinate S-adenosyl-L-methionine: R38, R63, D80, D108, and A109. Zn(2+) contacts are provided by C243, C246, C258, and C261.

Belongs to the class I-like SAM-binding methyltransferase superfamily. Trm1 family.

The catalysed reaction is guanosine(26) in tRNA + 2 S-adenosyl-L-methionine = N(2)-dimethylguanosine(26) in tRNA + 2 S-adenosyl-L-homocysteine + 2 H(+). Its function is as follows. Dimethylates a single guanine residue at position 26 of a number of tRNAs using S-adenosyl-L-methionine as donor of the methyl groups. This is tRNA (guanine(26)-N(2))-dimethyltransferase from Methanopyrus kandleri (strain AV19 / DSM 6324 / JCM 9639 / NBRC 100938).